The chain runs to 360 residues: Josephin-like protein (360 aa).

A Josephin domain is found at 5–192; sequence ESKIYHERQR…NQLPLASNYR (188 aa). Cys18 acts as the Nucleophile in catalysis. His129 serves as the catalytic Proton acceptor.

The enzyme catalyses Thiol-dependent hydrolysis of ester, thioester, amide, peptide and isopeptide bonds formed by the C-terminal Gly of ubiquitin (a 76-residue protein attached to proteins as an intracellular targeting signal).. May act as a deubiquitinating enzyme. The sequence is that of Josephin-like protein from Arabidopsis thaliana (Mouse-ear cress).